The sequence spans 212 residues: 3,4-dihydroxy-2-butanone 4-phosphate synthase (212 aa).

Residues 37 to 38 (RE), D42, 150 to 154 (RRGHT), and E174 each bind D-ribulose 5-phosphate. Position 38 (E38) interacts with Mg(2+). Residue H153 coordinates Mg(2+).

Belongs to the DHBP synthase family. In terms of assembly, homodimer. Mg(2+) serves as cofactor. The cofactor is Mn(2+).

The enzyme catalyses D-ribulose 5-phosphate = (2S)-2-hydroxy-3-oxobutyl phosphate + formate + H(+). It functions in the pathway cofactor biosynthesis; riboflavin biosynthesis; 2-hydroxy-3-oxobutyl phosphate from D-ribulose 5-phosphate: step 1/1. Functionally, catalyzes the conversion of D-ribulose 5-phosphate to formate and 3,4-dihydroxy-2-butanone 4-phosphate. The sequence is that of 3,4-dihydroxy-2-butanone 4-phosphate synthase from Shewanella halifaxensis (strain HAW-EB4).